A 537-amino-acid chain; its full sequence is Asparagine-rich protein (537 aa).

Disordered regions lie at residues 1–22, 187–254, 336–372, 399–479, and 509–528; these read YNNN…QNTN, NMNI…NNNF, YNNN…YGYD, LNNN…DDWG, and DLSK…MKKD. Low complexity-rich tracts occupy residues 336–347 and 399–469; these read YNNNESNTANPN and LNNN…NQNN. Positions 470-479 are enriched in acidic residues; that stretch reads NEDEDDDDWG. Residues 509–518 are compositionally biased toward basic and acidic residues; sequence DLSKKGNDGK.

This chain is Asparagine-rich protein, found in Plasmodium falciparum.